Here is a 287-residue protein sequence, read N- to C-terminus: Glycine--tRNA ligase alpha subunit (287 aa).

This sequence belongs to the class-II aminoacyl-tRNA synthetase family. In terms of assembly, tetramer of two alpha and two beta subunits.

It localises to the cytoplasm. It catalyses the reaction tRNA(Gly) + glycine + ATP = glycyl-tRNA(Gly) + AMP + diphosphate. In Campylobacter jejuni subsp. doylei (strain ATCC BAA-1458 / RM4099 / 269.97), this protein is Glycine--tRNA ligase alpha subunit.